Consider the following 150-residue polypeptide: Aspartate 1-decarboxylase (150 aa).

The active-site Schiff-base intermediate with substrate; via pyruvic acid is the serine 24. Serine 24 is subject to Pyruvic acid (Ser). Residue threonine 56 participates in substrate binding. Tyrosine 57 (proton donor) is an active-site residue. 72–74 (GAA) serves as a coordination point for substrate.

Belongs to the PanD family. In terms of assembly, heterooctamer of four alpha and four beta subunits. It depends on pyruvate as a cofactor. Post-translationally, is synthesized initially as an inactive proenzyme, which is activated by self-cleavage at a specific serine bond to produce a beta-subunit with a hydroxyl group at its C-terminus and an alpha-subunit with a pyruvoyl group at its N-terminus.

Its subcellular location is the cytoplasm. It catalyses the reaction L-aspartate + H(+) = beta-alanine + CO2. It participates in cofactor biosynthesis; (R)-pantothenate biosynthesis; beta-alanine from L-aspartate: step 1/1. Catalyzes the pyruvoyl-dependent decarboxylation of aspartate to produce beta-alanine. In Xanthobacter autotrophicus (strain ATCC BAA-1158 / Py2), this protein is Aspartate 1-decarboxylase.